Reading from the N-terminus, the 160-residue chain is 6,7-dimethyl-8-ribityllumazine synthase (160 aa).

5-amino-6-(D-ribitylamino)uracil is bound by residues Phe23, 61-63, and 85-87; these read SFE and AVI. Position 90–91 (90–91) interacts with (2S)-2-hydroxy-3-oxobutyl phosphate; the sequence is DT. Catalysis depends on His93, which acts as the Proton donor. Residue Phe118 coordinates 5-amino-6-(D-ribitylamino)uracil. Arg132 provides a ligand contact to (2S)-2-hydroxy-3-oxobutyl phosphate.

Belongs to the DMRL synthase family.

It catalyses the reaction (2S)-2-hydroxy-3-oxobutyl phosphate + 5-amino-6-(D-ribitylamino)uracil = 6,7-dimethyl-8-(1-D-ribityl)lumazine + phosphate + 2 H2O + H(+). It functions in the pathway cofactor biosynthesis; riboflavin biosynthesis; riboflavin from 2-hydroxy-3-oxobutyl phosphate and 5-amino-6-(D-ribitylamino)uracil: step 1/2. Functionally, catalyzes the formation of 6,7-dimethyl-8-ribityllumazine by condensation of 5-amino-6-(D-ribitylamino)uracil with 3,4-dihydroxy-2-butanone 4-phosphate. This is the penultimate step in the biosynthesis of riboflavin. The sequence is that of 6,7-dimethyl-8-ribityllumazine synthase from Synechococcus sp. (strain CC9605).